Reading from the N-terminus, the 864-residue chain is DNA mismatch repair protein MutS (864 aa).

613–620 (GPNMGGKS) is a binding site for ATP.

This sequence belongs to the DNA mismatch repair MutS family.

This protein is involved in the repair of mismatches in DNA. It is possible that it carries out the mismatch recognition step. This protein has a weak ATPase activity. In Actinobacillus pleuropneumoniae serotype 7 (strain AP76), this protein is DNA mismatch repair protein MutS.